The sequence spans 277 residues: C2H2-type zinc-finger transcription factor (277 aa).

Disordered regions lie at residues 23–66 (PTMN…AHPP) and 78–146 (MNEP…TDSI). Over residues 27–37 (EIETTDNTYPR) the composition is skewed to polar residues. The C2H2-type; degenerate zinc-finger motif lies at 185–208 (HPCPDCGRVFTRSTARNFHRQSGT).

Belongs to the GLI C2H2-type zinc-finger protein family.

Its subcellular location is the nucleus. Its function is as follows. C2H2-type zinc-finger transcription factor that controls the expression of the nonribosomal peptide synthases inpA and inpB, as well as of the other inp cluster-associated genes. Also mediates the expression of the asperfuranone biosynthesis gene cluster by binding to the afoA promoter. Probably recognizes the 5'-CT/C/AAAAGGAT/AT/GG/CA-3' motif in the promoters of teget genes. The sequence is that of C2H2-type zinc-finger transcription factor from Emericella nidulans (strain FGSC A4 / ATCC 38163 / CBS 112.46 / NRRL 194 / M139) (Aspergillus nidulans).